Reading from the N-terminus, the 164-residue chain is Ribosome maturation factor RimM (164 aa).

In terms of domain architecture, PRC barrel spans Lys-90–Trp-161.

It belongs to the RimM family. Binds ribosomal protein uS19.

The protein resides in the cytoplasm. Functionally, an accessory protein needed during the final step in the assembly of 30S ribosomal subunit, possibly for assembly of the head region. Essential for efficient processing of 16S rRNA. May be needed both before and after RbfA during the maturation of 16S rRNA. It has affinity for free ribosomal 30S subunits but not for 70S ribosomes. The chain is Ribosome maturation factor RimM from Clostridium botulinum (strain Hall / ATCC 3502 / NCTC 13319 / Type A).